A 448-amino-acid chain; its full sequence is Adenylosuccinate synthetase (448 aa).

GTP is bound by residues glycine 36–lysine 42 and glycine 64–threonine 66. Aspartate 37 functions as the Proton acceptor in the catalytic mechanism. Mg(2+) contacts are provided by aspartate 37 and glycine 64. IMP-binding positions include aspartate 37–lysine 40, asparagine 62–histidine 65, threonine 154, arginine 168, asparagine 246, threonine 261, and arginine 325. Histidine 65 (proton donor) is an active-site residue. Residue valine 321–arginine 327 coordinates substrate. GTP-binding positions include arginine 327, lysine 353 to aspartate 355, and glycine 436 to glycine 438.

Belongs to the adenylosuccinate synthetase family. In terms of assembly, homodimer. It depends on Mg(2+) as a cofactor.

Its subcellular location is the cytoplasm. The enzyme catalyses IMP + L-aspartate + GTP = N(6)-(1,2-dicarboxyethyl)-AMP + GDP + phosphate + 2 H(+). It participates in purine metabolism; AMP biosynthesis via de novo pathway; AMP from IMP: step 1/2. Plays an important role in the de novo pathway and in the salvage pathway of purine nucleotide biosynthesis. Catalyzes the first committed step in the biosynthesis of AMP from IMP. This is Adenylosuccinate synthetase from Drosophila virilis (Fruit fly).